Consider the following 472-residue polypeptide: Aspartyl/glutamyl-tRNA(Asn/Gln) amidotransferase subunit B (472 aa).

Belongs to the GatB/GatE family. GatB subfamily. As to quaternary structure, heterotrimer of A, B and C subunits.

It carries out the reaction L-glutamyl-tRNA(Gln) + L-glutamine + ATP + H2O = L-glutaminyl-tRNA(Gln) + L-glutamate + ADP + phosphate + H(+). The catalysed reaction is L-aspartyl-tRNA(Asn) + L-glutamine + ATP + H2O = L-asparaginyl-tRNA(Asn) + L-glutamate + ADP + phosphate + 2 H(+). Allows the formation of correctly charged Asn-tRNA(Asn) or Gln-tRNA(Gln) through the transamidation of misacylated Asp-tRNA(Asn) or Glu-tRNA(Gln) in organisms which lack either or both of asparaginyl-tRNA or glutaminyl-tRNA synthetases. The reaction takes place in the presence of glutamine and ATP through an activated phospho-Asp-tRNA(Asn) or phospho-Glu-tRNA(Gln). The protein is Aspartyl/glutamyl-tRNA(Asn/Gln) amidotransferase subunit B of Elusimicrobium minutum (strain Pei191).